We begin with the raw amino-acid sequence, 444 residues long: Squalene synthase ERG9 (444 aa).

The chain crosses the membrane as a helical span at residues 421–441 (FNMVLSIILSVLLGFYYIYTL).

The protein belongs to the phytoene/squalene synthase family. Mg(2+) is required as a cofactor.

Its subcellular location is the endoplasmic reticulum membrane. It is found in the microsome. It catalyses the reaction 2 (2E,6E)-farnesyl diphosphate + NADPH + H(+) = squalene + 2 diphosphate + NADP(+). It carries out the reaction 2 (2E,6E)-farnesyl diphosphate + NADH + H(+) = squalene + 2 diphosphate + NAD(+). It functions in the pathway terpene metabolism; lanosterol biosynthesis; lanosterol from farnesyl diphosphate: step 1/3. Squalene synthase; part of the third module of ergosterol biosynthesis pathway that includes the late steps of the pathway. ERG9 produces squalene from 2 farnesyl pyrophosphate moieties. The third module or late pathway involves the ergosterol synthesis itself through consecutive reactions that mainly occur in the endoplasmic reticulum (ER) membrane. Firstly, the squalene synthase ERG9 catalyzes the condensation of 2 farnesyl pyrophosphate moieties to form squalene, which is the precursor of all steroids. Squalene synthase is crucial for balancing the incorporation of farnesyl diphosphate (FPP) into sterol and nonsterol isoprene synthesis. Secondly, the squalene epoxidase ERG1 catalyzes the stereospecific oxidation of squalene to (S)-2,3-epoxysqualene, which is considered to be a rate-limiting enzyme in steroid biosynthesis. Then, the lanosterol synthase ERG7 catalyzes the cyclization of (S)-2,3 oxidosqualene to lanosterol, a reaction that forms the sterol core. In the next steps, lanosterol is transformed to zymosterol through a complex process involving various demethylation, reduction and desaturation reactions. The lanosterol 14-alpha-demethylase ERG11 (also known as CYP51) catalyzes C14-demethylation of lanosterol to produce 4,4'-dimethyl cholesta-8,14,24-triene-3-beta-ol, which is critical for ergosterol biosynthesis. The C-14 reductase ERG24 reduces the C14=C15 double bond of 4,4-dimethyl-cholesta-8,14,24-trienol to produce 4,4-dimethyl-cholesta-8,24-dienol. 4,4-dimethyl-cholesta-8,24-dienol is substrate of the C-4 demethylation complex ERG25-ERG26-ERG27 in which ERG25 catalyzes the three-step monooxygenation required for the demethylation of 4,4-dimethyl and 4alpha-methylsterols, ERG26 catalyzes the oxidative decarboxylation that results in a reduction of the 3-beta-hydroxy group at the C-3 carbon to an oxo group, and ERG27 is responsible for the reduction of the keto group on the C-3. ERG28 has a role as a scaffold to help anchor ERG25, ERG26 and ERG27 to the endoplasmic reticulum and ERG29 regulates the activity of the iron-containing C4-methylsterol oxidase ERG25. Then, the sterol 24-C-methyltransferase ERG6 catalyzes the methyl transfer from S-adenosyl-methionine to the C-24 of zymosterol to form fecosterol. The C-8 sterol isomerase ERG2 catalyzes the reaction which results in unsaturation at C-7 in the B ring of sterols and thus converts fecosterol to episterol. The sterol-C5-desaturase ERG3 then catalyzes the introduction of a C-5 double bond in the B ring to produce 5-dehydroepisterol. The C-22 sterol desaturase ERG5 further converts 5-dehydroepisterol into ergosta-5,7,22,24(28)-tetraen-3beta-ol by forming the C-22(23) double bond in the sterol side chain. Finally, ergosta-5,7,22,24(28)-tetraen-3beta-ol is substrate of the C-24(28) sterol reductase ERG4 to produce ergosterol. This chain is Squalene synthase ERG9, found in Saccharomyces cerevisiae (strain ATCC 204508 / S288c) (Baker's yeast).